Reading from the N-terminus, the 215-residue chain is Ribonuclease HII (215 aa).

The RNase H type-2 domain occupies 24 to 215; that stretch reads GVVFGVDEVG…PIRQFYENVD (192 aa). A divalent metal cation contacts are provided by D30, E31, and D125.

This sequence belongs to the RNase HII family. Mn(2+) serves as cofactor. The cofactor is Mg(2+).

It localises to the cytoplasm. It catalyses the reaction Endonucleolytic cleavage to 5'-phosphomonoester.. Its function is as follows. Endonuclease that specifically degrades the RNA of RNA-DNA hybrids. This is Ribonuclease HII from Zymomonas mobilis subsp. mobilis (strain ATCC 31821 / ZM4 / CP4).